A 324-amino-acid polypeptide reads, in one-letter code: BURP domain-containing protein 5 (324 aa).

A signal peptide spans 1–30 (MCATLCTLLDEISILILMLLLIQLEIRVSA). The region spanning 109–323 (FFLETNLQSS…QPDVVVWTRR (215 aa)) is the BURP domain.

In terms of tissue distribution, expressed in panicles.

This Oryza sativa subsp. japonica (Rice) protein is BURP domain-containing protein 5 (BURP5).